We begin with the raw amino-acid sequence, 358 residues long: Phosphoserine aminotransferase (358 aa).

Arginine 43 lines the L-glutamate pocket. Pyridoxal 5'-phosphate-binding residues include tryptophan 103, threonine 153, aspartate 172, and glutamine 195. N6-(pyridoxal phosphate)lysine is present on lysine 196. A pyridoxal 5'-phosphate-binding site is contributed by 236–237; it reads NT.

Belongs to the class-V pyridoxal-phosphate-dependent aminotransferase family. SerC subfamily. Homodimer. Requires pyridoxal 5'-phosphate as cofactor.

It is found in the cytoplasm. It carries out the reaction O-phospho-L-serine + 2-oxoglutarate = 3-phosphooxypyruvate + L-glutamate. It catalyses the reaction 4-(phosphooxy)-L-threonine + 2-oxoglutarate = (R)-3-hydroxy-2-oxo-4-phosphooxybutanoate + L-glutamate. It functions in the pathway amino-acid biosynthesis; L-serine biosynthesis; L-serine from 3-phospho-D-glycerate: step 2/3. It participates in cofactor biosynthesis; pyridoxine 5'-phosphate biosynthesis; pyridoxine 5'-phosphate from D-erythrose 4-phosphate: step 3/5. Catalyzes the reversible conversion of 3-phosphohydroxypyruvate to phosphoserine and of 3-hydroxy-2-oxo-4-phosphonooxybutanoate to phosphohydroxythreonine. This Dichelobacter nodosus (strain VCS1703A) protein is Phosphoserine aminotransferase.